The chain runs to 476 residues: Bifunctional protein HldE (476 aa).

A ribokinase region spans residues 1 to 319; it reads MKVSLPAFEK…EALALHHGES (319 aa). 195–198 is an ATP binding site; that stretch reads NMSE. The active site involves Asp264. The tract at residues 345–476 is cytidylyltransferase; sequence MTNGCFDILH…AIIQNIMAKQ (132 aa).

It in the N-terminal section; belongs to the carbohydrate kinase PfkB family. The protein in the C-terminal section; belongs to the cytidylyltransferase family. In terms of assembly, homodimer.

It carries out the reaction D-glycero-beta-D-manno-heptose 7-phosphate + ATP = D-glycero-beta-D-manno-heptose 1,7-bisphosphate + ADP + H(+). The catalysed reaction is D-glycero-beta-D-manno-heptose 1-phosphate + ATP + H(+) = ADP-D-glycero-beta-D-manno-heptose + diphosphate. Its pathway is nucleotide-sugar biosynthesis; ADP-L-glycero-beta-D-manno-heptose biosynthesis; ADP-L-glycero-beta-D-manno-heptose from D-glycero-beta-D-manno-heptose 7-phosphate: step 1/4. It participates in nucleotide-sugar biosynthesis; ADP-L-glycero-beta-D-manno-heptose biosynthesis; ADP-L-glycero-beta-D-manno-heptose from D-glycero-beta-D-manno-heptose 7-phosphate: step 3/4. In terms of biological role, catalyzes the phosphorylation of D-glycero-D-manno-heptose 7-phosphate at the C-1 position to selectively form D-glycero-beta-D-manno-heptose-1,7-bisphosphate. Its function is as follows. Catalyzes the ADP transfer from ATP to D-glycero-beta-D-manno-heptose 1-phosphate, yielding ADP-D-glycero-beta-D-manno-heptose. The protein is Bifunctional protein HldE of Shewanella sp. (strain ANA-3).